A 297-amino-acid polypeptide reads, in one-letter code: Tyrosine recombinase XerD (297 aa).

The region spanning 1 to 86 (MKNLALIDLF…AMRKLFQYLY (86 aa)) is the Core-binding (CB) domain. The region spanning 107-291 (RLPKYLTEQQ…AKERLKRLHE (185 aa)) is the Tyr recombinase domain. Residues Arg147, Lys171, His243, Arg246, and His269 contribute to the active site. The active-site O-(3'-phospho-DNA)-tyrosine intermediate is Tyr278.

Belongs to the 'phage' integrase family. XerD subfamily. In terms of assembly, forms a cyclic heterotetrameric complex composed of two molecules of XerC and two molecules of XerD.

Its subcellular location is the cytoplasm. Functionally, site-specific tyrosine recombinase, which acts by catalyzing the cutting and rejoining of the recombining DNA molecules. The XerC-XerD complex is essential to convert dimers of the bacterial chromosome into monomers to permit their segregation at cell division. It also contributes to the segregational stability of plasmids. This is Tyrosine recombinase XerD from Haemophilus influenzae (strain ATCC 51907 / DSM 11121 / KW20 / Rd).